The sequence spans 498 residues: Pre-glycoprotein polyprotein GP complex (498 aa).

The N-myristoyl glycine; by host moiety is linked to residue glycine 2. Over 2–17 (GQIVTMFEALPHIIDE) the chain is Extracellular. Residues 18-33 (VINIVIIVLIIITSIK) traverse the membrane as a helical segment. The Cytoplasmic segment spans residues 34 to 58 (AVYNFATCGILALVSFLFLAGRSCG). Position 57 (cysteine 57) interacts with Zn(2+). Topologically, residues 59 to 438 (MYGLNGPDIY…QGSTPLALMD (380 aa)) are extracellular. Residues asparagine 85, asparagine 95, asparagine 114, asparagine 124, and asparagine 171 are each glycosylated (N-linked (GlcNAc...) asparagine; by host). 6 disulfide bridges follow: cysteine 92-cysteine 239, cysteine 123-cysteine 160, cysteine 184-cysteine 220, cysteine 285-cysteine 298, cysteine 307-cysteine 316, and cysteine 370-cysteine 391. Residue asparagine 232 is glycosylated (N-linked (GlcNAc...) asparagine; by host). Residues asparagine 371, asparagine 396, and asparagine 401 are each glycosylated (N-linked (GlcNAc...) asparagine; by host). Residues 439–459 (LLMFSTSAYLISIFLHFVRIP) traverse the membrane as a helical segment. Topologically, residues 460-498 (THRHIKGGSCPKPHRLTNKGICSCGAFKVPGVKTIWKRR) are cytoplasmic. Zn(2+)-binding residues include histidine 461, histidine 463, cysteine 469, histidine 473, cysteine 481, and cysteine 483.

It belongs to the arenaviridae GPC protein family. As to quaternary structure, interacts with glycoprotein G2. Part of the GP complex (GP-C) together with glycoprotein G1 and glycoprotein G2. The GP-complex interacts with protein Z, which interacts with ribonucleocapsid; these interactions may induce virion budding. Homotrimer; disulfide-linked. In pre-fusion state, G1 homotrimers bind G2 homotrimers via ionic interactions. Part of the GP complex (GP-C) together with glycoprotein G2 and the stable signal peptide. Interacts with the primary host receptor DAG1 on the cell surface. The GP-complex interacts with protein Z, which interacts with ribonucleocapsid; these interactions may induce virion budding. In terms of assembly, homotrimer. Interacts with the stable signal peptide. In pre-fusion state, G2 homotrimers bind G1 homotrimers via ionic interactions. Part of the GP complex (GP-C) together with glycoprotein G1 and the stable signal peptide. Acidification in the endosome triggers rearrangements, which ultimately leads to a 6 helix bundle formed by the two heptad repeat domains (HR1 and HR2) in post-fusion state. The GP-complex interacts with protein Z, which interacts with ribonucleocapsid; these interactions may induce virion budding. Post-translationally, specific enzymatic cleavages in vivo yield mature proteins. GP-C polyprotein is cleaved in the endoplasmic reticulum by the host protease MBTPS1. Only cleaved glycoprotein is incorporated into virions. The SSP remains stably associated with the GP complex following cleavage by signal peptidase and plays crucial roles in the trafficking of GP through the secretory pathway. In terms of processing, myristoylation is necessary for GP2-mediated fusion activity.

The protein localises to the virion membrane. It localises to the host endoplasmic reticulum membrane. It is found in the host Golgi apparatus membrane. Its subcellular location is the host cell membrane. In terms of biological role, functions as a cleaved signal peptide that is retained as the third component of the GP complex (GP-C). Helps to stabilize the spike complex in its native conformation. The SSP is required for efficient glycoprotein expression, post-translational maturation cleavage of G1 and G2, glycoprotein transport to the cell surface plasma membrane, formation of infectious virus particles, and acid pH-dependent glycoprotein-mediated cell fusion. Its function is as follows. Forms the virion spikes together with glycoprotein G2. The glycoprotein spike trimers are connected to the underlying matrix. Interacts with the host receptor. Mediates virus attachment to the host primary receptor alpha-dystroglycan DAG1 (alpha-DG) at the cell surface. Down-modulates host DAG1. Functionally, forms the virion spikes together with glycoprotein G1. The glycoprotein spike trimers are connected to the underlying matrix. Class I viral fusion protein that directs fusion of viral and host endosomal membranes, leading to delivery of the nucleocapsid into the cytoplasm. Membrane fusion is mediated by irreversible conformational changes induced by acidification. The protein is Pre-glycoprotein polyprotein GP complex of Homo sapiens (Human).